A 78-amino-acid polypeptide reads, in one-letter code: UPF0291 protein Ldb1355 (78 aa).

The protein belongs to the UPF0291 family.

Its subcellular location is the cytoplasm. The chain is UPF0291 protein Ldb1355 from Lactobacillus delbrueckii subsp. bulgaricus (strain ATCC 11842 / DSM 20081 / BCRC 10696 / JCM 1002 / NBRC 13953 / NCIMB 11778 / NCTC 12712 / WDCM 00102 / Lb 14).